Here is a 282-residue protein sequence, read N- to C-terminus: Pantothenate synthetase (282 aa).

Position 30 to 37 (30 to 37 (MGYLHEGH)) interacts with ATP. The active-site Proton donor is H37. Q61 contacts (R)-pantoate. Q61 lines the beta-alanine pocket. An ATP-binding site is contributed by 147–150 (GMKD). Residue Q153 coordinates (R)-pantoate. Residues V176 and 184–187 (KSSR) each bind ATP.

The protein belongs to the pantothenate synthetase family. As to quaternary structure, homodimer.

The protein resides in the cytoplasm. It catalyses the reaction (R)-pantoate + beta-alanine + ATP = (R)-pantothenate + AMP + diphosphate + H(+). It participates in cofactor biosynthesis; (R)-pantothenate biosynthesis; (R)-pantothenate from (R)-pantoate and beta-alanine: step 1/1. In terms of biological role, catalyzes the condensation of pantoate with beta-alanine in an ATP-dependent reaction via a pantoyl-adenylate intermediate. The chain is Pantothenate synthetase from Bacillus thuringiensis subsp. konkukian (strain 97-27).